The sequence spans 441 residues: Tryptophan aminotransferase-related protein 1 (441 aa).

Residues Tyr110, Ser152–Thr153, Asn219, Asp239–Tyr242, Thr262–Lys265, and Arg273 each bind pyridoxal 5'-phosphate. N6-(pyridoxal phosphate)lysine is present on Lys265.

It belongs to the alliinase family. Pyridoxal 5'-phosphate serves as cofactor. As to expression, highly expressed in anthers. Expressed at low levels in ovaries.

It carries out the reaction L-tryptophan + 2-oxoglutarate = indole-3-pyruvate + L-glutamate. Its pathway is plant hormone metabolism; auxin biosynthesis. Functionally, probable tryptophan aminotransferase that may be involved in the regulation of auxin production in developing rice grains. In Oryza sativa subsp. japonica (Rice), this protein is Tryptophan aminotransferase-related protein 1.